Consider the following 265-residue polypeptide: Beta-lactamase SHV-4 (265 aa).

The Acyl-ester intermediate role is filled by Ser45. Cysteines 52 and 98 form a disulfide. The active-site Proton acceptor is the Glu143. Lys209–Gly211 contacts substrate.

It belongs to the class-A beta-lactamase family.

It carries out the reaction a beta-lactam + H2O = a substituted beta-amino acid. Its function is as follows. SHV enzymes hydrolyze broad spectrum cephalosporins notably cefotaxime and ceftazidime. SHV-4 causes particularly high levels of resistance to aztreonam and ceftazidime. The polypeptide is Beta-lactamase SHV-4 (bla) (Klebsiella pneumoniae).